A 282-amino-acid chain; its full sequence is F-box protein VBF (282 aa).

The region spanning 1 to 44 is the F-box domain; it reads MMMLPEACIANILAFTSPADAFSSSEVSSVFRLAGDSDFVWEKF.

Component of SCF(VBF) E3 ubiquitin ligase complex that interacts with VIP1. Interacts directly with SKP1A and VIP1. Forms a complex composed of VIP1, VBF and Agrobacterium virE2.

Functionally, component of SCF(VBF) E3 ubiquitin ligase complexes, which mediate the ubiquitination and subsequent proteasomal degradation of target proteins such as VIP1 and Agrobacterium virE2, after their implication in T-DNA translocation to the host nucleus (can functionally replace Agrobacterium VirF). Required during Agrobacterium-induced tumor formation. This Arabidopsis thaliana (Mouse-ear cress) protein is F-box protein VBF (VBF).